The sequence spans 426 residues: Histidine--tRNA ligase (426 aa).

Belongs to the class-II aminoacyl-tRNA synthetase family.

Its subcellular location is the cytoplasm. It catalyses the reaction tRNA(His) + L-histidine + ATP = L-histidyl-tRNA(His) + AMP + diphosphate + H(+). The polypeptide is Histidine--tRNA ligase (hisS) (Thermoplasma volcanium (strain ATCC 51530 / DSM 4299 / JCM 9571 / NBRC 15438 / GSS1)).